We begin with the raw amino-acid sequence, 494 residues long: Sugiol synthase (494 aa).

Residues 3–23 (SFSLLAALFFISAATWFISSR) form a helical membrane-spanning segment. Residue Cys-437 coordinates heme.

The protein belongs to the cytochrome P450 family. Heme is required as a cofactor. As to expression, expressed in roots.

The protein resides in the membrane. It catalyses the reaction ferruginol + 2 reduced [NADPH--hemoprotein reductase] + 2 O2 = sugiol + 2 oxidized [NADPH--hemoprotein reductase] + 3 H2O + 2 H(+). The catalysed reaction is ferruginol + reduced [NADPH--hemoprotein reductase] + O2 = 11-hydroxyferruginol + oxidized [NADPH--hemoprotein reductase] + H2O + H(+). The enzyme catalyses 11-hydroxyferruginol + 2 reduced [NADPH--hemoprotein reductase] + 2 O2 = 11-hydroxysugiol + 2 oxidized [NADPH--hemoprotein reductase] + 3 H2O + 2 H(+). It functions in the pathway secondary metabolite biosynthesis; terpenoid biosynthesis. Functionally, monooxygenase that oxidizes ferruginol to produce sugiol. Oxidizes ferruginol at C-12 to produce 11-hydroxyferruginol. Can oxidize 11-hydroxyferruginol to 11-hydroxysugiol. These products are intermediates in tanshinone biosynthesis. The protein is Sugiol synthase of Salvia miltiorrhiza (Chinese sage).